The following is a 29-amino-acid chain: Galanin (29 aa).

Alanine amide is present on Ala-29.

Belongs to the galanin family.

The protein resides in the secreted. Functionally, contracts smooth muscle of the gastrointestinal and genitourinary tract, regulates growth hormone release, modulates insulin release, and may be involved in the control of adrenal secretion. This chain is Galanin (GAL), found in Alligator mississippiensis (American alligator).